A 517-amino-acid chain; its full sequence is Ammonium transporter 3 (517 aa).

At 1–32 (MLNEPNALLRRDANSTIATVTELFPNEYSNAD) the chain is on the extracellular side. A helical membrane pass occupies residues 33–53 (IAYVLLSTVVVFTVTPGIALY). Topologically, residues 54–69 (YAGMVRKNSALSILTQ) are cytoplasmic. The helical transmembrane segment at 70-90 (SFLVTAVVFIQWYLFGYSLAC) threads the bilayer. The Extracellular portion of the chain corresponds to 91-118 (SSGSSFYGTLWQGGMNHLWLEPYIPGST). A helical transmembrane segment spans residues 119–139 (IPAIVYFPFGGLFAVATAQLF). At 140–148 (AGAMAERGR) the chain is on the cytoplasmic side. Residues 149-169 (LIPSLVISFLYITLVYCPQAY) traverse the membrane as a helical segment. The Extracellular portion of the chain corresponds to 170–180 (WTWAPNGWLYT). A helical transmembrane segment spans residues 181-201 (LGALDFAGGGPVHISSGFAAL). Over 202–272 (AYSLCLGRRI…AHNPPHDAGM (71 aa)) the chain is Cytoplasmic. A helical membrane pass occupies residues 273-293 (VYIGVVLIWFAWLCFNSGTLL). Residues 294-299 (TVNIRT) are Extracellular-facing. A helical membrane pass occupies residues 300–320 (AYIMTNTLISSSFGALTWAII). The Cytoplasmic portion of the chain corresponds to 321-327 (DYIRYRK). The helical transmembrane segment at 328–348 (FSTIGICEGAIAGLVGITPAC) threads the bilayer. Residue G349 is a topological domain, extracellular. A helical membrane pass occupies residues 350-370 (FVFPWGAAAGGIVPALVCNFL). Residues 371-384 (HDLNEWIGVDETLR) are Cytoplasmic-facing. A helical membrane pass occupies residues 385-405 (VFNLHGIGGIVGSIVLGVVAH). Residues 406 to 432 (PDVAASDGATVIDGGWAVHHWKQMGYQ) lie on the Extracellular side of the membrane. The chain crosses the membrane as a helical span at residues 433–453 (FAGFTSVAAWSFVITAIICLL). Topologically, residues 454–517 (VDLVPGLHIR…NIKQEKQDEF (64 aa)) are cytoplasmic.

The protein belongs to the ammonia transporter channel (TC 1.A.11.2) family.

The protein localises to the membrane. Its function is as follows. Transporter for ammonium to use as a nitrogen source. This is Ammonium transporter 3 (amt3) from Schizosaccharomyces pombe (strain 972 / ATCC 24843) (Fission yeast).